We begin with the raw amino-acid sequence, 564 residues long: Proline--tRNA ligase (564 aa).

Belongs to the class-II aminoacyl-tRNA synthetase family. ProS type 1 subfamily. As to quaternary structure, homodimer.

It is found in the cytoplasm. It catalyses the reaction tRNA(Pro) + L-proline + ATP = L-prolyl-tRNA(Pro) + AMP + diphosphate. Functionally, catalyzes the attachment of proline to tRNA(Pro) in a two-step reaction: proline is first activated by ATP to form Pro-AMP and then transferred to the acceptor end of tRNA(Pro). As ProRS can inadvertently accommodate and process non-cognate amino acids such as alanine and cysteine, to avoid such errors it has two additional distinct editing activities against alanine. One activity is designated as 'pretransfer' editing and involves the tRNA(Pro)-independent hydrolysis of activated Ala-AMP. The other activity is designated 'posttransfer' editing and involves deacylation of mischarged Ala-tRNA(Pro). The misacylated Cys-tRNA(Pro) is not edited by ProRS. In Coxiella burnetii (strain Dugway 5J108-111), this protein is Proline--tRNA ligase.